Here is a 654-residue protein sequence, read N- to C-terminus: Spindle assembly abnormal protein 6 homolog (654 aa).

In terms of domain architecture, PISA spans 39–91 (VHRKDLVIRLTDDTDPFFLYNLVISEEDFQSLKLQQGLLVDFLAFPQKFIDLL). A coiled-coil region spans residues 175-471 (TRQLHITQET…QLLKNNEKLI (297 aa)). The residue at position 509 (Ser-509) is a Phosphoserine. Residues 568 to 589 (ASIDGQPGAAVNRPCSNDKENG) are disordered. Residue Ser-612 is modified to Phosphoserine. Over residues 634–644 (SKPTVLPSSSS) the composition is skewed to low complexity. The tract at residues 634–654 (SKPTVLPSSSSAYFPGQLPSS) is disordered. Ser-654 carries the post-translational modification Phosphoserine.

Nine homodimers form a cartwheel structure with an internal diameter of 23 nm and radial spokes connecting to the microtubule triplets. Forms a complex with CPAP and STIL. Interacts with FBXW5. Interacts with NUP62 and TUBG1 at the centrosome. Interacts with CENATAC; the interaction increases with CENATAC acetylation. Interacts with FZR1; the interaction is regulated by CENATAC and leads to SASS6 proteasomal degradation. In terms of processing, ubiquitinated by the SCF(FBXW5) E3 ubiquitin-protein ligase complex during S phase, leading to its degradation and preventing centriole reduplication. Ubiquitinated by the anaphase promoting complex/cyclosome (APC/C) E3 ubiquitin-protein ligase complex, leading to its degradation and preventing centriole reduplication.

Its subcellular location is the cytoplasm. The protein resides in the cytoskeleton. The protein localises to the microtubule organizing center. It localises to the centrosome. It is found in the centriole. Functionally, central scaffolding component of the centrioles ensuring their 9-fold symmetry. Required for centrosome biogenesis and duplication. Required both for mother-centriole-dependent centriole duplication and deuterosome-dependent centriole amplification in multiciliated cells. Not required for centriole formation in embryonic stem cells but necessary to maintain centriole architecture. Required for the recruitment of STIL to the procentriole and for STIL-mediated centriole amplification. The polypeptide is Spindle assembly abnormal protein 6 homolog (Mus musculus (Mouse)).